The chain runs to 269 residues: ParA family protein MG470 (269 aa).

This sequence belongs to the ParA family.

This chain is ParA family protein MG470, found in Mycoplasma genitalium (strain ATCC 33530 / DSM 19775 / NCTC 10195 / G37) (Mycoplasmoides genitalium).